A 199-amino-acid chain; its full sequence is Transmembrane protein 9B (199 aa).

An N-terminal signal peptide occupies residues M1–A34. N-linked (GlcNAc...) asparagine glycosylation occurs at N61. Residues I106–V126 traverse the membrane as a helical segment. A phosphoserine mark is found at S143 and S190.

It belongs to the TMEM9 family. N-glycosylated.

The protein resides in the lysosome membrane. Its subcellular location is the early endosome membrane. Functionally, enhances production of pro-inflammatory cytokines induced by TNF, IL1B, and TLR ligands. Has a role in TNF activation of both the NF-kappaB and MAPK pathways. This chain is Transmembrane protein 9B (Tmem9b), found in Mus musculus (Mouse).